Reading from the N-terminus, the 92-residue chain is Small ribosomal subunit protein uS19c (92 aa).

Belongs to the universal ribosomal protein uS19 family.

It is found in the plastid. The protein localises to the chloroplast. In terms of biological role, protein S19 forms a complex with S13 that binds strongly to the 16S ribosomal RNA. The sequence is that of Small ribosomal subunit protein uS19c from Lactuca sativa (Garden lettuce).